Consider the following 396-residue polypeptide: Ribosomal RNA large subunit methyltransferase I (396 aa).

The PUA domain maps to 2 to 81; it reads SVRLVLAKGR…ESIDIAFFSR (80 aa).

The protein belongs to the methyltransferase superfamily. RlmI family.

The protein localises to the cytoplasm. It carries out the reaction cytidine(1962) in 23S rRNA + S-adenosyl-L-methionine = 5-methylcytidine(1962) in 23S rRNA + S-adenosyl-L-homocysteine + H(+). In terms of biological role, specifically methylates the cytosine at position 1962 (m5C1962) of 23S rRNA. In Shigella boydii serotype 4 (strain Sb227), this protein is Ribosomal RNA large subunit methyltransferase I.